Reading from the N-terminus, the 322-residue chain is Ferredoxin--NADP reductase (322 aa).

7 residues coordinate FAD: Asp33, Gln41, Tyr46, Ala86, Phe120, Asp278, and Ser319.

Belongs to the ferredoxin--NADP reductase type 2 family. In terms of assembly, homodimer. The cofactor is FAD.

It catalyses the reaction 2 reduced [2Fe-2S]-[ferredoxin] + NADP(+) + H(+) = 2 oxidized [2Fe-2S]-[ferredoxin] + NADPH. This is Ferredoxin--NADP reductase from Salinispora tropica (strain ATCC BAA-916 / DSM 44818 / JCM 13857 / NBRC 105044 / CNB-440).